The sequence spans 436 residues: GDP-mannose 6-dehydrogenase (436 aa).

NAD(+)-binding residues include Tyr-10, Val-11, Asp-30, Lys-35, Thr-86, and Thr-124. Residues Glu-161, Lys-210, Asn-214, His-217, Asn-225, Tyr-256, Tyr-257, Arg-259, Phe-262, and Gly-265 each coordinate GDP-alpha-D-mannuronate. Cys-268 (nucleophile) is an active-site residue. Lys-271 provides a ligand contact to NAD(+). The segment at Tyr-278 to Arg-295 is inter-domain linker. Lys-324 serves as a coordination point for GDP-alpha-D-mannuronate. Residue Arg-331 coordinates NAD(+).

Belongs to the UDP-glucose/GDP-mannose dehydrogenase family. As to quaternary structure, forms a domain-swapped dimer with each peptide contributing to each active site. The dimers assemble further. X-ray structures indicate this enzyme exists as a homotetramer PubMed:12705829, but kinetic and physical results obtained in PubMed:2470755 and PubMed:12135385 indicate that it is probably a homohexamer.

The enzyme catalyses GDP-alpha-D-mannose + 2 NAD(+) + H2O = GDP-alpha-D-mannuronate + 2 NADH + 3 H(+). Its pathway is glycan biosynthesis; alginate biosynthesis. With respect to regulation, inhibited by GMP, ATP, GDP-D-glucose and maltose. Inhibited by GMP and deamidoNAD. Its function is as follows. Catalyzes the oxidation of guanosine diphospho-D-mannose (GDP-D-mannose) to GDP-D-mannuronic acid, a precursor for alginate polymerization. The alginate layer causes a mucoid phenotype and provides a protective barrier against host immune defenses and antibiotics. Other sugars are not used as substrates. This Pseudomonas aeruginosa (strain ATCC 15692 / DSM 22644 / CIP 104116 / JCM 14847 / LMG 12228 / 1C / PRS 101 / PAO1) protein is GDP-mannose 6-dehydrogenase.